A 339-amino-acid chain; its full sequence is DNA-directed RNA polymerase subunit alpha (339 aa).

The tract at residues 1 to 233 (MVREEVAGST…DLFLPFLHAE (233 aa)) is alpha N-terminal domain (alpha-NTD). Residues 264–339 (KKGIPLNYIF…IDLLKNKLSF (76 aa)) form an alpha C-terminal domain (alpha-CTD) region.

It belongs to the RNA polymerase alpha chain family. In plastids the minimal PEP RNA polymerase catalytic core is composed of four subunits: alpha, beta, beta', and beta''. When a (nuclear-encoded) sigma factor is associated with the core the holoenzyme is formed, which can initiate transcription.

The protein resides in the plastid. Its subcellular location is the chloroplast. The enzyme catalyses RNA(n) + a ribonucleoside 5'-triphosphate = RNA(n+1) + diphosphate. Functionally, DNA-dependent RNA polymerase catalyzes the transcription of DNA into RNA using the four ribonucleoside triphosphates as substrates. The polypeptide is DNA-directed RNA polymerase subunit alpha (Psathyrostachys rupestris (Hordeum rupestre)).